Consider the following 120-residue polypeptide: Large ribosomal subunit protein uL18 (120 aa).

The protein belongs to the universal ribosomal protein uL18 family. As to quaternary structure, part of the 50S ribosomal subunit; part of the 5S rRNA/L5/L18/L25 subcomplex. Contacts the 5S and 23S rRNAs.

In terms of biological role, this is one of the proteins that bind and probably mediate the attachment of the 5S RNA into the large ribosomal subunit, where it forms part of the central protuberance. The sequence is that of Large ribosomal subunit protein uL18 from Beijerinckia indica subsp. indica (strain ATCC 9039 / DSM 1715 / NCIMB 8712).